A 430-amino-acid chain; its full sequence is Adenylosuccinate synthetase (430 aa).

Residues glycine 13–lysine 19 and glycine 41–threonine 43 contribute to the GTP site. Catalysis depends on aspartate 14, which acts as the Proton acceptor. Aspartate 14 and glycine 41 together coordinate Mg(2+). IMP-binding positions include aspartate 14–lysine 17, asparagine 39–histidine 42, threonine 130, arginine 144, glutamine 225, threonine 240, and arginine 304. Histidine 42 acts as the Proton donor in catalysis. Position 300-306 (alanine 300–arginine 306) interacts with substrate. Residues arginine 306, lysine 332 to aspartate 334, and serine 414 to glycine 416 each bind GTP.

The protein belongs to the adenylosuccinate synthetase family. Homodimer. It depends on Mg(2+) as a cofactor.

It localises to the cytoplasm. It carries out the reaction IMP + L-aspartate + GTP = N(6)-(1,2-dicarboxyethyl)-AMP + GDP + phosphate + 2 H(+). Its pathway is purine metabolism; AMP biosynthesis via de novo pathway; AMP from IMP: step 1/2. Functionally, plays an important role in the de novo pathway of purine nucleotide biosynthesis. Catalyzes the first committed step in the biosynthesis of AMP from IMP. This Xanthomonas axonopodis pv. citri (strain 306) protein is Adenylosuccinate synthetase.